A 316-amino-acid chain; its full sequence is Pantothenate kinase (316 aa).

Residue 96-103 (GSVAVGKS) coordinates ATP.

Belongs to the prokaryotic pantothenate kinase family.

Its subcellular location is the cytoplasm. It carries out the reaction (R)-pantothenate + ATP = (R)-4'-phosphopantothenate + ADP + H(+). It participates in cofactor biosynthesis; coenzyme A biosynthesis; CoA from (R)-pantothenate: step 1/5. This Shouchella clausii (strain KSM-K16) (Alkalihalobacillus clausii) protein is Pantothenate kinase.